A 204-amino-acid chain; its full sequence is Partner of Y14 and mago (204 aa).

Disordered regions lie at residues 1 to 121 (MGSR…QSVN) and 133 to 153 (SSNN…EDVE). A compositionally biased stretch (basic and acidic residues) spans 7–36 (EQGKRMAELSKNLKEGERILEPTRRPDGTL). Polar residues predominate over residues 104 to 121 (KANSSEDGSASNGSQSVN). A Nuclear export signal motif is present at residues 195–200 (ELKALE).

Belongs to the pym family. Interacts with MAGO and Y14. As to expression, expressed in root and shoot meristems, cotyledons, vascular tissues of leaves, receptacle of flowers and siliques, and pollen grains.

The protein localises to the cytoplasm. It localises to the nucleus. It is found in the nucleolus. Its subcellular location is the nucleoplasm. Functionally, key regulator of the exon junction complex (EJC), a multiprotein complex that associates immediately upstream of the exon-exon junction on mRNAs and serves as a positional landmark for the intron exon structure of genes and directs post-transcriptional processes in the cytoplasm such as mRNA export, nonsense-mediated mRNA decay (NMD) or translation. Acts as an EJC disassembly factor, allowing translation-dependent EJC removal and recycling by disrupting mature EJC from spliced mRNAs. Can increase in vitro the expression from reporter constructs that contain leader introns required for the expression of different genes. In association with MAGO and PYM, participates in intron-mediated enhancement of gene expression. The sequence is that of Partner of Y14 and mago from Arabidopsis thaliana (Mouse-ear cress).